The primary structure comprises 1404 residues: Microtubule organization protein AKNA (1404 aa).

Disordered stretches follow at residues 1-304 (MASS…VSPL) and 317-382 (QHKQ…RPLI). Ser51 bears the Phosphoserine mark. A compositionally biased stretch (acidic residues) spans 70–91 (WDPDMQDSEESSGEETEADDAS). Residues 185 to 203 (KSWSSGTVSLRQPSDSLGS) are compositionally biased toward polar residues. A Phosphoserine modification is found at Ser302. 2 positions are modified to phosphoserine: Ser485 and Ser520. Residues 494-549 (AEWWPDPAQDPQASEATGWPFPRTDLSPSSSPGVATPGRLPQSQGIATDQPSTGQT) form a disordered region. The segment covering 534-549 (PQSQGIATDQPSTGQT) has biased composition (polar residues). Ser617 bears the Phosphoserine mark. Over residues 645-659 (MDQTQRETEPCRPDL) the composition is skewed to basic and acidic residues. The interval 645–708 (MDQTQRETEP…TSPGSSCTLP (64 aa)) is disordered. Composition is skewed to polar residues over residues 660–674 (QDSTPTMSFLPQSAH) and 686–707 (DGQTYQEPATTTTTSPGSSCTL). Residues Ser750 and Ser753 each carry the phosphoserine modification. The segment at 754 to 787 (LPEALRDEDEDDLEEEEEEQDHQGPLEVDSPATA) is PEST. 2 disordered regions span residues 755-1038 (PEAL…STAN) and 1085-1185 (HSTQ…RERV). A compositionally biased stretch (acidic residues) spans 759–773 (RDEDEDDLEEEEEEQ). A compositionally biased stretch (basic and acidic residues) spans 803–813 (TQAEESHRDAT). Residues Ser831 and Ser860 each carry the phosphoserine modification. The PEST stretch occupies residues 885-906 (HTEEPWMVSPETDSGFVGSETS). Composition is skewed to polar residues over residues 903 to 914 (SETSIVSPFTQT), 921 to 933 (HVSTSGPSAQHLT), and 963 to 974 (SRTQQHFSSLSS). Ser971 carries the post-translational modification Phosphoserine. A compositionally biased stretch (low complexity) spans 1015–1029 (TSPDSAPAPTAASTP). Residues 1085-1098 (HSTQTQEKLGSSPS) are compositionally biased toward polar residues. A DNA-binding region (a.T hook) is located at residues 1088 to 1096 (QTQEKLGSS). Phosphoserine is present on residues Ser1144 and Ser1145. Basic and acidic residues predominate over residues 1155 to 1167 (SSEKSRTFEEHPE). Ser1200 is modified (phosphoserine). 2 disordered regions span residues 1208-1235 (SGTPSCPHCHPIRTQDTGSAVSRDTTRG) and 1253-1286 (SAEADGSSSGPSEKNTPKKPSTPILKRKNRQTGS). A compositionally biased stretch (polar residues) spans 1221–1235 (TQDTGSAVSRDTTRG). Phosphoserine occurs at positions 1339, 1352, and 1389.

Belongs to the AKNA family. In terms of assembly, interacts with DCTN1. Interacts with MAPRE1/EB1. Interacts with ODF2. Interacts with CAMSAP3. In terms of processing, phosphorylated; phosphorylation regulates dissociation from and reassembly at the centrosome. Expressed in neural stem cells isolated at the peak of subventricular zone (SVZ): localizes at the subdistal appendages of the mother centriole in specific subtypes of neural stem cells and in almost all basal progenitors.

It is found in the cytoplasm. The protein localises to the cytoskeleton. Its subcellular location is the microtubule organizing center. It localises to the centrosome. The protein resides in the centriole. It is found in the nucleus. Centrosomal protein that plays a key role in cell delamination by regulating microtubule organization. Required for the delamination and retention of neural stem cells from the subventricular zone during neurogenesis. Also regulates the epithelial-to-mesenchymal transition in other epithelial cells. Acts by increasing centrosomal microtubule nucleation and recruiting nucleation factors and minus-end stabilizers, thereby destabilizing microtubules at the adherens junctions and mediating constriction of the apical endfoot. In addition, may also act as a transcription factor that specifically activates the expression of the CD40 receptor and its ligand CD40L/CD154, two cell surface molecules on lymphocytes that are critical for antigen-dependent-B-cell development. Binds to A/T-rich promoters. It is unclear how it can both act as a microtubule organizer and as a transcription factor; additional evidences are required to reconcile these two apparently contradictory functions. The chain is Microtubule organization protein AKNA from Mus musculus (Mouse).